A 382-amino-acid chain; its full sequence is D-galactonate dehydratase (382 aa).

Mg(2+) is bound at residue Asp183. Catalysis depends on His185, which acts as the Proton donor. Residues Glu209 and Glu235 each coordinate Mg(2+). Catalysis depends on His285, which acts as the Proton acceptor.

This sequence belongs to the mandelate racemase/muconate lactonizing enzyme family. GalD subfamily. Mg(2+) serves as cofactor.

The enzyme catalyses D-galactonate = 2-dehydro-3-deoxy-D-galactonate + H2O. It participates in carbohydrate acid metabolism; D-galactonate degradation; D-glyceraldehyde 3-phosphate and pyruvate from D-galactonate: step 1/3. Functionally, catalyzes the dehydration of D-galactonate to 2-keto-3-deoxy-D-galactonate. The sequence is that of D-galactonate dehydratase from Klebsiella pneumoniae subsp. pneumoniae (strain ATCC 700721 / MGH 78578).